Reading from the N-terminus, the 436-residue chain is UPF0597 protein YhaM (436 aa).

This sequence belongs to the UPF0597 family.

This Escherichia coli O127:H6 (strain E2348/69 / EPEC) protein is UPF0597 protein YhaM.